The primary structure comprises 490 residues: Ketol-acid reductoisomerase (NADP(+)) (490 aa).

A KARI N-terminal Rossmann domain is found at 16–207 (INKCRFMKKE…GGHRAGVLES (192 aa)). Residues 44–47 (CGAQ), Lys67, Ser77, and 107–109 (DKQ) each bind NADP(+). His131 is an active-site residue. Gly157 is a binding site for NADP(+). KARI C-terminal knotted domains are found at residues 208-343 (SFIA…TAPV) and 344-483 (YNEK…MKKM). Positions 216, 220, 388, and 392 each coordinate Mg(2+). Ser413 is a substrate binding site.

It belongs to the ketol-acid reductoisomerase family. Requires Mg(2+) as cofactor.

The enzyme catalyses (2R)-2,3-dihydroxy-3-methylbutanoate + NADP(+) = (2S)-2-acetolactate + NADPH + H(+). It catalyses the reaction (2R,3R)-2,3-dihydroxy-3-methylpentanoate + NADP(+) = (S)-2-ethyl-2-hydroxy-3-oxobutanoate + NADPH + H(+). It functions in the pathway amino-acid biosynthesis; L-isoleucine biosynthesis; L-isoleucine from 2-oxobutanoate: step 2/4. Its pathway is amino-acid biosynthesis; L-valine biosynthesis; L-valine from pyruvate: step 2/4. Functionally, involved in the biosynthesis of branched-chain amino acids (BCAA). Catalyzes an alkyl-migration followed by a ketol-acid reduction of (S)-2-acetolactate (S2AL) to yield (R)-2,3-dihydroxy-isovalerate. In the isomerase reaction, S2AL is rearranged via a Mg-dependent methyl migration to produce 3-hydroxy-3-methyl-2-ketobutyrate (HMKB). In the reductase reaction, this 2-ketoacid undergoes a metal-dependent reduction by NADPH to yield (R)-2,3-dihydroxy-isovalerate. The protein is Ketol-acid reductoisomerase (NADP(+)) of Buchnera aphidicola subsp. Acyrthosiphon pisum (strain 5A).